Consider the following 356-residue polypeptide: Tyrosine recombinase XerS (356 aa).

In terms of domain architecture, Core-binding (CB) spans 16–121; it reads LMPWFVLEYY…ALSCLYKYLT (106 aa). Residues 169–354 form the Tyr recombinase domain; it reads KFLDYVENEY…VNDEQKNALD (186 aa). Active-site residues include R210, K234, H306, R309, and H332. The O-(3'-phospho-DNA)-tyrosine intermediate role is filled by Y341.

It belongs to the 'phage' integrase family. XerS subfamily.

It localises to the cytoplasm. FtsK is required for recombination. In terms of biological role, site-specific tyrosine recombinase, which acts by catalyzing the cutting and rejoining of the recombining DNA molecules. Essential to convert dimers of the bacterial chromosome into monomers to permit their segregation at cell division. In Streptococcus thermophilus (strain ATCC BAA-250 / LMG 18311), this protein is Tyrosine recombinase XerS.